The sequence spans 91 residues: Small ribosomal subunit protein uS19 (91 aa).

Belongs to the universal ribosomal protein uS19 family.

In terms of biological role, protein S19 forms a complex with S13 that binds strongly to the 16S ribosomal RNA. The polypeptide is Small ribosomal subunit protein uS19 (Bordetella pertussis (strain Tohama I / ATCC BAA-589 / NCTC 13251)).